We begin with the raw amino-acid sequence, 274 residues long: MATITAADVNKLRTITGAGMMDCKKALVESDGDFDLAIENLRKKGQKVAANRSDRESTEGAAIAVVNADNTVGVVITLNCETDFVGMNENFVKMAVEMANLALNFNNKEEFLASDFNGITIADKLIEQTGVIGEKLEIRTFEKLEGAFVGSYIHSGNKIATLTAFSAKADGIEEAARNVAMQAAAMNPIALNEEGVDADTIAKEIEIAKDMLRAEGKPEAMIENIAKGKLGRFFKDNTLVNQDYIKDSSMSVANYVKSIDANLIVTGFKRAALG.

An involved in Mg(2+) ion dislocation from EF-Tu region spans residues 82–85 (TDFV).

It belongs to the EF-Ts family.

The protein localises to the cytoplasm. Functionally, associates with the EF-Tu.GDP complex and induces the exchange of GDP to GTP. It remains bound to the aminoacyl-tRNA.EF-Tu.GTP complex up to the GTP hydrolysis stage on the ribosome. This is Elongation factor Ts from Flavobacterium psychrophilum (strain ATCC 49511 / DSM 21280 / CIP 103535 / JIP02/86).